The chain runs to 275 residues: NAD kinase (275 aa).

The active-site Proton acceptor is the Asp68. Residues 68–69 (DG), Arg73, 136–137 (NE), Lys147, Arg164, Asp166, 177–182 (TAYAMS), Ala201, and Gln236 contribute to the NAD(+) site.

It belongs to the NAD kinase family. Requires a divalent metal cation as cofactor.

The protein localises to the cytoplasm. It carries out the reaction NAD(+) + ATP = ADP + NADP(+) + H(+). Involved in the regulation of the intracellular balance of NAD and NADP, and is a key enzyme in the biosynthesis of NADP. Catalyzes specifically the phosphorylation on 2'-hydroxyl of the adenosine moiety of NAD to yield NADP. In Methanosarcina acetivorans (strain ATCC 35395 / DSM 2834 / JCM 12185 / C2A), this protein is NAD kinase.